Reading from the N-terminus, the 146-residue chain is Basic phospholipase A2 (146 aa).

The signal sequence occupies residues 1–21; it reads MYPAHLLVLLAVCVSLLGAAS. Residues 22-27 constitute a propeptide that is removed on maturation; sequence IPPLPL. Disulfide bonds link cysteine 38–cysteine 98, cysteine 54–cysteine 145, cysteine 56–cysteine 72, cysteine 71–cysteine 126, cysteine 78–cysteine 119, cysteine 87–cysteine 112, and cysteine 105–cysteine 117. Ca(2+)-binding residues include tyrosine 55, glycine 57, and glycine 59. Residue histidine 75 is part of the active site. Aspartate 76 contacts Ca(2+). Residue aspartate 120 is part of the active site.

This sequence belongs to the phospholipase A2 family. Group I subfamily. D49 sub-subfamily. Ca(2+) serves as cofactor. Expressed by the venom gland.

The protein localises to the secreted. It carries out the reaction a 1,2-diacyl-sn-glycero-3-phosphocholine + H2O = a 1-acyl-sn-glycero-3-phosphocholine + a fatty acid + H(+). In terms of biological role, snake venom phospholipase A2 (PLA2) that inhibits neuromuscular transmission by blocking acetylcholine release from the nerve termini. PLA2 catalyzes the calcium-dependent hydrolysis of the 2-acyl groups in 3-sn-phosphoglycerides. This chain is Basic phospholipase A2, found in Hydrophis hardwickii (Hardwick's spine-bellied seasnake).